Here is a 216-residue protein sequence, read N- to C-terminus: Adenylate kinase (216 aa).

10-15 (GAGKGT) lines the ATP pocket. Positions 30-59 (STGDIFRAAIKNQTPMGVEAKKFIDKGELV) are NMP. AMP is bound by residues T31, R36, 57 to 59 (ELV), 85 to 88 (GFPR), and Q92. The tract at residues 126–164 (GRFICRNCGTTYHRLYNPTKVEGTCDVCGGHDFYQRDDD) is LID. R127 lines the ATP pocket. 2 residues coordinate Zn(2+): C130 and C133. Residue 136–137 (TY) coordinates ATP. Residues C150 and C153 each coordinate Zn(2+). AMP contacts are provided by R161 and R172. Position 200 (Q200) interacts with ATP.

It belongs to the adenylate kinase family. Monomer.

The protein resides in the cytoplasm. It catalyses the reaction AMP + ATP = 2 ADP. Its pathway is purine metabolism; AMP biosynthesis via salvage pathway; AMP from ADP: step 1/1. In terms of biological role, catalyzes the reversible transfer of the terminal phosphate group between ATP and AMP. Plays an important role in cellular energy homeostasis and in adenine nucleotide metabolism. This chain is Adenylate kinase, found in Limosilactobacillus fermentum (strain NBRC 3956 / LMG 18251) (Lactobacillus fermentum).